A 462-amino-acid chain; its full sequence is Integrator complex subunit 12 (462 aa).

The segment at Gly-42–Val-132 is disordered. The span at Ile-59–Val-86 shows a compositional bias: polar residues. Lys-68 participates in a covalent cross-link: Glycyl lysine isopeptide (Lys-Gly) (interchain with G-Cter in SUMO2). Positions Thr-88–Glu-124 are enriched in basic and acidic residues. Residue Ser-128 is modified to Phosphoserine. Residues Gly-159–Gln-215 form a PHD-type zinc finger. Residue Lys-254 forms a Glycyl lysine isopeptide (Lys-Gly) (interchain with G-Cter in SUMO2) linkage. The span at Ser-301–Gln-328 shows a compositional bias: polar residues. The interval Ser-301–Lys-462 is disordered. Composition is skewed to low complexity over residues Lys-347–Val-358 and Val-382–Ser-437. Residues Gln-449–Lys-462 are compositionally biased toward basic residues.

The protein belongs to the Integrator subunit 12 family. In terms of assembly, component of the Integrator complex, composed of core subunits INTS1, INTS2, INTS3, INTS4, INTS5, INTS6, INTS7, INTS8, INTS9/RC74, INTS10, INTS11/CPSF3L, INTS12, INTS13, INTS14 and INTS15. The core complex associates with protein phosphatase 2A subunits PPP2CA and PPP2R1A, to form the Integrator-PP2A (INTAC) complex. Post-translationally, dephosphorylated at Ser-128 by the PNUTS-PP1 complex, promoting RNA polymerase II transcription pause-release.

It is found in the nucleus. In terms of biological role, component of the integrator complex, a multiprotein complex that terminates RNA polymerase II (Pol II) transcription in the promoter-proximal region of genes. The integrator complex provides a quality checkpoint during transcription elongation by driving premature transcription termination of transcripts that are unfavorably configured for transcriptional elongation: the complex terminates transcription by (1) catalyzing dephosphorylation of the C-terminal domain (CTD) of Pol II subunit POLR2A/RPB1 and SUPT5H/SPT5, (2) degrading the exiting nascent RNA transcript via endonuclease activity and (3) promoting the release of Pol II from bound DNA. The integrator complex is also involved in terminating the synthesis of non-coding Pol II transcripts, such as enhancer RNAs (eRNAs), small nuclear RNAs (snRNAs), telomerase RNAs and long non-coding RNAs (lncRNAs). Mediates recruitment of cytoplasmic dynein to the nuclear envelope, probably as component of the integrator complex. This is Integrator complex subunit 12 from Homo sapiens (Human).